The primary structure comprises 372 residues: N-methyl-L-tryptophan oxidase (372 aa).

4 to 34 (DLIIIGSGSVGAAAGYYATRAGLNVLMTDAH) lines the FAD pocket. C308 carries the S-8alpha-FAD cysteine modification.

The protein belongs to the MSOX/MTOX family. MTOX subfamily. As to quaternary structure, monomer. It depends on FAD as a cofactor.

It catalyses the reaction N(alpha)-methyl-L-tryptophan + O2 + H2O = L-tryptophan + formaldehyde + H2O2. Functionally, catalyzes the oxidative demethylation of N-methyl-L-tryptophan. The sequence is that of N-methyl-L-tryptophan oxidase from Escherichia coli O6:H1 (strain CFT073 / ATCC 700928 / UPEC).